We begin with the raw amino-acid sequence, 470 residues long: Cysteine--tRNA ligase (470 aa).

A Zn(2+)-binding site is contributed by Cys-28. A 'HIGH' region motif is present at residues 30 to 40; it reads PTVYNYIHIGN. Zn(2+) contacts are provided by Cys-212, His-237, and Glu-241. The 'KMSKS' region signature appears at 271 to 275; sequence KMSKS. Lys-274 is an ATP binding site.

This sequence belongs to the class-I aminoacyl-tRNA synthetase family. Monomer. The cofactor is Zn(2+).

Its subcellular location is the cytoplasm. It catalyses the reaction tRNA(Cys) + L-cysteine + ATP = L-cysteinyl-tRNA(Cys) + AMP + diphosphate. The sequence is that of Cysteine--tRNA ligase from Levilactobacillus brevis (strain ATCC 367 / BCRC 12310 / CIP 105137 / JCM 1170 / LMG 11437 / NCIMB 947 / NCTC 947) (Lactobacillus brevis).